The sequence spans 357 residues: Protein pelota homolog (357 aa).

It belongs to the eukaryotic release factor 1 family. Pelota subfamily. In terms of assembly, monomer. A divalent metal cation is required as a cofactor.

It localises to the cytoplasm. In terms of biological role, may function in recognizing stalled ribosomes, interact with stem-loop structures in stalled mRNA molecules, and effect endonucleolytic cleavage of the mRNA. May play a role in the release non-functional ribosomes and degradation of damaged mRNAs. Has endoribonuclease activity. The protein is Protein pelota homolog of Thermococcus kodakarensis (strain ATCC BAA-918 / JCM 12380 / KOD1) (Pyrococcus kodakaraensis (strain KOD1)).